Reading from the N-terminus, the 447-residue chain is Ribosomal protein uS12 methylthiotransferase RimO (447 aa).

One can recognise an MTTase N-terminal domain in the interval 4–114; sequence PKVGFVSLGC…VMEAVHEYVP (111 aa). [4Fe-4S] cluster-binding residues include Cys13, Cys49, Cys78, Cys147, Cys151, and Cys154. A Radical SAM core domain is found at 133–370; sequence LTPKHYAYLK…MQVQQQISAA (238 aa). The TRAM domain maps to 373-443; sequence QKRIGQTMTV…EYDLFAKLIK (71 aa).

This sequence belongs to the methylthiotransferase family. RimO subfamily. [4Fe-4S] cluster is required as a cofactor.

The protein resides in the cytoplasm. It catalyses the reaction L-aspartate(89)-[ribosomal protein uS12]-hydrogen + (sulfur carrier)-SH + AH2 + 2 S-adenosyl-L-methionine = 3-methylsulfanyl-L-aspartate(89)-[ribosomal protein uS12]-hydrogen + (sulfur carrier)-H + 5'-deoxyadenosine + L-methionine + A + S-adenosyl-L-homocysteine + 2 H(+). Its function is as follows. Catalyzes the methylthiolation of an aspartic acid residue of ribosomal protein uS12. In Acinetobacter baumannii (strain AB0057), this protein is Ribosomal protein uS12 methylthiotransferase RimO.